Reading from the N-terminus, the 419-residue chain is Adenylosuccinate synthetase (419 aa).

GTP-binding positions include 11-17 and 39-41; these read GDEGKGK and GHT. The Proton acceptor role is filled by D12. Residues D12 and G39 each coordinate Mg(2+). IMP-binding positions include 12-15, 37-40, T129, R143, N218, T233, and R297; these read DEGK and NAGH. Residue H40 is the Proton donor of the active site. Residue 293-299 participates in substrate binding; sequence VTTGRKR. GTP-binding positions include R299, 325–327, and 407–409; these read KLD and GTG.

The protein belongs to the adenylosuccinate synthetase family. In terms of assembly, homodimer. The cofactor is Mg(2+).

Its subcellular location is the cytoplasm. It catalyses the reaction IMP + L-aspartate + GTP = N(6)-(1,2-dicarboxyethyl)-AMP + GDP + phosphate + 2 H(+). The protein operates within purine metabolism; AMP biosynthesis via de novo pathway; AMP from IMP: step 1/2. Functionally, plays an important role in the de novo pathway and in the salvage pathway of purine nucleotide biosynthesis. Catalyzes the first committed step in the biosynthesis of AMP from IMP. The chain is Adenylosuccinate synthetase from Coccidioides posadasii (strain C735) (Valley fever fungus).